Here is a 308-residue protein sequence, read N- to C-terminus: Microtubule integrity protein mal3 (308 aa).

Positions 2–103 constitute a Calponin-homology (CH) domain; that stretch reads SESRQELLAW…FVQWAKRFWD (102 aa). The disordered stretch occupies residues 117–162; it reads RGNRGPANTRVMNSSAGATGPSRRRQVSSGSSTPSMTKSSANNNNV. A compositionally biased stretch (low complexity) spans 144–162; sequence SSGSSTPSMTKSSANNNNV. The EB1 C-terminal domain maps to 173-247; the sequence is RAKQAQQQIT…LYSTEDGFEL (75 aa).

Belongs to the MAPRE family. In terms of assembly, interacts with tea2.

The protein localises to the cytoplasm. It localises to the cytoskeleton. Functionally, may play a role in regulating the integrity of microtubules possibly by influencing their stability. Involved in an anchoring mechanism to maintain tea2 and tip1 at growing microtubule ends. Strongly stimulates the ATPase activity of tea2. In Schizosaccharomyces pombe (strain 972 / ATCC 24843) (Fission yeast), this protein is Microtubule integrity protein mal3 (mal3).